A 290-amino-acid polypeptide reads, in one-letter code: 4-hydroxybenzoate octaprenyltransferase (290 aa).

Transmembrane regions (helical) follow at residues 33 to 53 (LAAL…AVFV), 91 to 111 (LGVR…FVLV), 116 to 136 (WEAV…PFTK), 138 to 158 (FFAM…VIAF), 165 to 185 (VPAT…AYDT), 212 to 232 (VAAI…VLAP), 237 to 257 (WPLW…FTLI), and 269 to 289 (FSKS…GYLL).

It belongs to the UbiA prenyltransferase family. Requires Mg(2+) as cofactor.

It localises to the cell inner membrane. It catalyses the reaction all-trans-octaprenyl diphosphate + 4-hydroxybenzoate = 4-hydroxy-3-(all-trans-octaprenyl)benzoate + diphosphate. It functions in the pathway cofactor biosynthesis; ubiquinone biosynthesis. Functionally, catalyzes the prenylation of para-hydroxybenzoate (PHB) with an all-trans polyprenyl group. Mediates the second step in the final reaction sequence of ubiquinone-8 (UQ-8) biosynthesis, which is the condensation of the polyisoprenoid side chain with PHB, generating the first membrane-bound Q intermediate 3-octaprenyl-4-hydroxybenzoate. This Acidovorax ebreus (strain TPSY) (Diaphorobacter sp. (strain TPSY)) protein is 4-hydroxybenzoate octaprenyltransferase.